A 579-amino-acid polypeptide reads, in one-letter code: Mycobactin import ATP-binding/permease protein IrtB (579 aa).

Topologically, residues 1-16 are cytoplasmic; it reads MIRTWIALVPNDHRAR. A helical transmembrane segment spans residues 17–37; it reads LIGFALLAFCSVVARAVGTVL. In terms of domain architecture, ABC transmembrane type-1 spans 17-299; that stretch reads LIGFALLAFC…VSELAPALES (283 aa). Topologically, residues 38–52 are periplasmic; that stretch reads LVPLMAALFGEAPQR. Residues 53-73 traverse the membrane as a helical segment; it reads AWLWLGWLSAATVAGWVLDAV. The Cytoplasmic portion of the chain corresponds to 74–123; that stretch reads TARIGIELGFAVLNHTQHDVADRLPVVRLDWFTAENTATARQAIAATGPE. The helical transmembrane segment at 124–146 threads the bilayer; that stretch reads LVGLVVNLVTPLTSAILLPAVIA. Topologically, residues 147 to 155 are periplasmic; the sequence is LALLPISWQ. Residues 156–178 form a helical membrane-spanning segment; sequence LGVAALAGVPLLLGALWASAAFA. The Cytoplasmic portion of the chain corresponds to 179 to 237; sequence RRADTAADKANTALTERIIEFARTQQALRAARRVEPARSLVGNALASQHTATMRLLGMQ. A helical membrane pass occupies residues 238-258; that stretch reads IPGQLLFSIASQLALIVLAGT. Residues 259–579 are Periplasmic-facing; sequence TAALTITGTL…EAAEWQILAE (321 aa). Residues 332-567 enclose the ABC transporter domain; the sequence is IEFDDVAFGY…GGRFSQFWRQ (236 aa). 366–373 is an ATP binding site; that stretch reads GPSGCGKS.

The protein belongs to the ABC transporter superfamily. Siderophore-Fe(3+) uptake transporter (SIUT) (TC 3.A.1.21) family. Forms a heterodimer with IrtA.

It is found in the cell inner membrane. Its function is as follows. Part of the ABC transporter complex IrtAB involved in the import of iron-bound mycobactin (Fe-MBT) and carboxymycobactin (Fe-cMBT). Transmembrane domains (TMD) form a pore in the membrane and the ATP-binding domain (NBD) is responsible for energy generation. This chain is Mycobactin import ATP-binding/permease protein IrtB (irtB), found in Mycobacterium bovis (strain ATCC BAA-935 / AF2122/97).